The chain runs to 132 residues: Small ribosomal subunit protein uS8 (132 aa).

This sequence belongs to the universal ribosomal protein uS8 family. In terms of assembly, part of the 30S ribosomal subunit. Contacts proteins S5 and S12.

In terms of biological role, one of the primary rRNA binding proteins, it binds directly to 16S rRNA central domain where it helps coordinate assembly of the platform of the 30S subunit. The polypeptide is Small ribosomal subunit protein uS8 (Bartonella quintana (strain Toulouse) (Rochalimaea quintana)).